Consider the following 153-residue polypeptide: Aspartate carbamoyltransferase regulatory chain (153 aa).

C109, C114, C135, and C138 together coordinate Zn(2+).

This sequence belongs to the PyrI family. Contains catalytic and regulatory chains. Zn(2+) is required as a cofactor.

Involved in allosteric regulation of aspartate carbamoyltransferase. This Natronomonas pharaonis (strain ATCC 35678 / DSM 2160 / CIP 103997 / JCM 8858 / NBRC 14720 / NCIMB 2260 / Gabara) (Halobacterium pharaonis) protein is Aspartate carbamoyltransferase regulatory chain.